Here is a 279-residue protein sequence, read N- to C-terminus: ATP-dependent Clp protease proteolytic subunit-related protein 2, chloroplastic (279 aa).

The N-terminal 54 residues, 1 to 54 (MAVSFNTTLHQPSLSPSCSIKLYSGLKPQSASFLASGYQNLNKEFYGRVYKSLQ), are a transit peptide targeting the chloroplast.

The protein belongs to the peptidase S14 family. Component of the chloroplastic Clp protease core complex which consist of at least 16 proteins: CLPP4 (3 copies), CLPP5 (3 copies), CLPR4 (2 copies), ClpP1 (1 copy), CLPP6 (1 copy), CLPR2 (1 copy), CLPT1 (1 copy), CLPT2 (1 copy) and 3 copies of CLPP3 and/or CLPR1 and/or CLPR3. The core complex is organized in two heptameric rings, one containing CLPP3,4,5,6 in a 1:2:3:1 ratio and the other CLPP1 and CLPR1,2,3,4 in a 3:1:1:1:1 ratio. As to expression, expressed at least in leaves and roots.

It localises to the plastid. It is found in the chloroplast. Functionally, required for chloroplast development and integrity. Involved in the regulation of plastoglobules formation. This is ATP-dependent Clp protease proteolytic subunit-related protein 2, chloroplastic from Arabidopsis thaliana (Mouse-ear cress).